Consider the following 633-residue polypeptide: MNIRSNPDTTLPAVTTGPLPSSRKIYAVPDSAPDLRVPLREIILSEAASEPNLPVYDTSGPYTDPSVTIDVNAGLPRNRIAWVLERGGVEEYVGRDIKPEDNGNVGADKAAKAFTAHHKPLRGLDGHKITQLEFARAGIVTKEMIYVAERENLGRKVQLERAEAALADGESFGASVPAFITPEFVRDEIARGRAIIPCNINHAELEPMIIGRNFLTKINANIGNSAVTSSVEEEVDKMVWAIRWGADTVMDLSTGRNIHTTREWILRNSPVPIGTVPIYQALEKCNGDPVALTWELYKDTLIEQCEQGVDYFTIHAGVRLQYIHLTASRVTGIVSRGGSIMAKWCLAHHKESFLYTHFDEICDIMRKYDVSFSLGDGLRPGSIADANDRAQFAELETLGELTKIAWDKGCQVMIEGPGHVPMHKIKINMDKQLKECGEAPFYTLGPLTTDIAPGYDHITSGIGAAMIGWFGCAMLCYVTPKEHLGLPDRNDVKTGVITYKIAAHAADLAKGHPAAQLRDDALSRARFEFRWTDQFNLGLDPDTAKSFHDETLPKEAHKVAHFCSMCGPKFCSMKITQDVRDYAATLNDPATVGMTISGTIEDGMAQMSAKFKEMGGSVYLDAEKVKESNKALS.

A compositionally biased stretch (polar residues) spans 1-13 (MNIRSNPDTTLPA). A disordered region spans residues 1-20 (MNIRSNPDTTLPAVTTGPLP). Substrate contacts are provided by residues Asn-221, Met-250, Tyr-279, His-315, 335-337 (SRG), 376-379 (DGLR), and Glu-415. Zn(2+) is bound at residue His-419. Tyr-442 is a substrate binding site. His-483 is a Zn(2+) binding site. [4Fe-4S] cluster contacts are provided by Cys-563, Cys-566, and Cys-571.

The protein belongs to the ThiC family. As to quaternary structure, homodimer. The cofactor is [4Fe-4S] cluster.

The enzyme catalyses 5-amino-1-(5-phospho-beta-D-ribosyl)imidazole + S-adenosyl-L-methionine = 4-amino-2-methyl-5-(phosphooxymethyl)pyrimidine + CO + 5'-deoxyadenosine + formate + L-methionine + 3 H(+). It functions in the pathway cofactor biosynthesis; thiamine diphosphate biosynthesis. Catalyzes the synthesis of the hydroxymethylpyrimidine phosphate (HMP-P) moiety of thiamine from aminoimidazole ribotide (AIR) in a radical S-adenosyl-L-methionine (SAM)-dependent reaction. The sequence is that of Phosphomethylpyrimidine synthase from Bradyrhizobium sp. (strain ORS 278).